The sequence spans 369 residues: Peptide chain release factor 2 (369 aa).

Q251 is modified (N5-methylglutamine).

This sequence belongs to the prokaryotic/mitochondrial release factor family. Methylated by PrmC. Methylation increases the termination efficiency of RF2.

The protein localises to the cytoplasm. Its function is as follows. Peptide chain release factor 2 directs the termination of translation in response to the peptide chain termination codons UGA and UAA. The sequence is that of Peptide chain release factor 2 (prfB) from Chlamydia pneumoniae (Chlamydophila pneumoniae).